The following is a 584-amino-acid chain: Protein DENND6A (584 aa).

Residues 1–23 (MALWERGAGGAAEAGEDATEEPE) are disordered. A uDENN domain is found at 39-218 (HCVCVVGFDL…KLRIPTYRDK (180 aa)). Residues 244–369 (EVDLFRCFCP…VKVKKLKNLK (126 aa)) enclose the cDENN domain. A dDENN domain is found at 371–504 (LDSKPGVYTS…RSRQKEMTQN (134 aa)).

Belongs to the DENND6 family.

Its subcellular location is the recycling endosome. It is found in the cytoplasm. Its function is as follows. Guanine nucleotide exchange factor (GEF) for RAB14. The protein is Protein DENND6A (DENND6A) of Gallus gallus (Chicken).